Consider the following 152-residue polypeptide: Large ribosomal subunit protein bL9 (152 aa).

Belongs to the bacterial ribosomal protein bL9 family.

Functionally, binds to the 23S rRNA. The polypeptide is Large ribosomal subunit protein bL9 (Crocosphaera subtropica (strain ATCC 51142 / BH68) (Cyanothece sp. (strain ATCC 51142))).